We begin with the raw amino-acid sequence, 232 residues long: 7-cyano-7-deazaguanine synthase (232 aa).

8–18 (FSGGQDSTTCL) provides a ligand contact to ATP. 4 residues coordinate Zn(2+): Cys189, Cys198, Cys201, and Cys204.

Belongs to the QueC family. The cofactor is Zn(2+).

The enzyme catalyses 7-carboxy-7-deazaguanine + NH4(+) + ATP = 7-cyano-7-deazaguanine + ADP + phosphate + H2O + H(+). The protein operates within purine metabolism; 7-cyano-7-deazaguanine biosynthesis. Its function is as follows. Catalyzes the ATP-dependent conversion of 7-carboxy-7-deazaguanine (CDG) to 7-cyano-7-deazaguanine (preQ(0)). The protein is 7-cyano-7-deazaguanine synthase of Serratia proteamaculans (strain 568).